We begin with the raw amino-acid sequence, 252 residues long: Floral homeotic protein AGAMOUS (252 aa).

The 55-residue stretch at 19-73 (RGKIEIKRIENTTNRQVTFCKRRNGLLKKAYELSVLCDAEVALIVFSSRGRLYEY) folds into the MADS-box domain. In terms of domain architecture, K-box spans 103-193 (AQYYQQESAK…RAKIAENERN (91 aa)).

It localises to the nucleus. Probable transcription factor involved in regulating genes that determines stamen and carpel development in wild-type flowers. The chain is Floral homeotic protein AGAMOUS (AG1) from Brassica napus (Rape).